A 635-amino-acid chain; its full sequence is Glutamine--fructose-6-phosphate aminotransferase [isomerizing] (635 aa).

Residue C2 is the Nucleophile; for GATase activity of the active site. Residues 2–218 (CGIVGMVAGR…EGDIADVHRD (217 aa)) form the Glutamine amidotransferase type-2 domain. SIS domains lie at 299–439 (FERL…AKKI) and 472–625 (CARH…IDQP). The For Fru-6P isomerization activity role is filled by K630.

In terms of assembly, homodimer.

It localises to the cytoplasm. The catalysed reaction is D-fructose 6-phosphate + L-glutamine = D-glucosamine 6-phosphate + L-glutamate. In terms of biological role, catalyzes the first step in hexosamine metabolism, converting fructose-6P into glucosamine-6P using glutamine as a nitrogen source. The sequence is that of Glutamine--fructose-6-phosphate aminotransferase [isomerizing] from Treponema pallidum (strain Nichols).